The following is a 284-amino-acid chain: Nucleotide-binding protein SO_3964 (284 aa).

8 to 15 is a binding site for ATP; sequence GRSGSGKS. 56–59 lines the GTP pocket; that stretch reads DVRN.

This sequence belongs to the RapZ-like family.

Its function is as follows. Displays ATPase and GTPase activities. The polypeptide is Nucleotide-binding protein SO_3964 (Shewanella oneidensis (strain ATCC 700550 / JCM 31522 / CIP 106686 / LMG 19005 / NCIMB 14063 / MR-1)).